The following is a 395-amino-acid chain: Protein RIF2 (395 aa).

In terms of assembly, interacts with RIF1 and RAP1 C-terminus.

It is found in the nucleus. The protein resides in the chromosome. It localises to the telomere. Involved in transcriptional silencing and telomere length regulation. Its role in telomere length regulation results from either a block in elongation or promoting degradation of the telomere ends. Loss of RIF1 function results in derepression of an HMR silencer, whose ARS consensus element has been deleted, and in the elongation of telomeres. RAP1 may target the binding of RIF1 to silencers and telomeres. In Saccharomyces cerevisiae (strain ATCC 204508 / S288c) (Baker's yeast), this protein is Protein RIF2 (RIF2).